A 493-amino-acid polypeptide reads, in one-letter code: MFDGRNSGHSSFSSRGDGMHTPEHELAGHAAPSTRRGKQNRRSDMEVMKERFAKLLLGEDMSGGGTGETSALALSNAITKLADSMFGEQMKLQPMYPETKENWRKEMGWLLSVIDHIVQFVPSRQMGKNGQFTEIMVTKQRDDLLTNIPALRKLDSVLLETLDNFKDQKDFWYVPRDMEDADHNGDWRRDENWWLPVVKVPTDGLSEESRRWLQNQKDSVAQVLKAATAINAHVLSEMHVPENYIDSLPKNGKTSLGDFLYKSITEESFDPDYFVSFLDLSTEHKVLDLKNRIEASMVIWKRKMCQKEKDGKSQWGSTVSLEKRELFEVRAETILVMLKQQFPGIPQSSLEVSKIKNNKDVGQAILESYSRVLESLASKIMSRIEDVLEADRLVQRQLMGEAETRSESEAESEYEETEKVVAAETPNSRKLSDFIGWRLSSDTKKHSSMSDIEFFHKVEQEKEKPMMKSPRALPKKFSYLAKLENMRSPSDRH.

2 disordered regions span residues 1–45 (MFDG…RSDM) and 400–423 (GEAE…VVAA). Residues 17-27 (DGMHTPEHELA) show a composition bias toward basic and acidic residues. One can recognise a PRONE domain in the interval 35-401 (RRGKQNRRSD…RLVQRQLMGE (367 aa)).

Guanine-nucleotide exchange factor (GEF) that acts as an activator of Rop (Rho of plants) GTPases by promoting the exchange of GDP for GTP. The sequence is that of Rop guanine nucleotide exchange factor 10 (ROPGEF10) from Arabidopsis thaliana (Mouse-ear cress).